The primary structure comprises 1906 residues: MKFQFSSPSKIFLFSSVILILIFIGIKFELLEDTNSNRNDKFNNIINRFINYNIDDSIYKNKQQQQQFSNKIYSNEKKILLKNKIIDTTIKPSININNNNNNNNKLNNNNNNNNNNNNNNNNNNNNNNNNNNNNYYNSIEYYSSFVSRLLKSNDDDGIYYDDYQSKYKKNHYIVQFKDRINDETREQLKEFLIGTDITILKEQPFKSHIVHYIPHDSFLVFMTKEQSVLLSSKEWISWIGEHEPSNKIHLNYHEKSIGYPVYIILSGSTNSLIQRWENTLNSILTSYNSKVKLTLINQKKLKSIVYCNDESPSSSSSSSCSLIGSEKIVYKWISEQSESNYIERSEKLQTANRLSPTVIFGTKDKLVNNDRIDIPLRGKGQILSIADTGLDGSHCFFSDSKYPIPFNQVNENHRKVVTYITYHDNEDYVNGHGTHVCGSAAGTPEDSSWAISSFSGLATDAKIAFYDLSSGSSEPTPPEDYSQMYKPLYDAGARVHGDSWGSVSLQGYYGGYSDDAGGIDAFLYEYPEFSILRAAGNNELFASLLAQATAKNAITVGAEQTAHVNYVSDALEYYDFSDNANFQRPCLFDKKYCNYTTAKCCSEVSNVKGLQLCCPASIKQNASDSFTTQPQFYNENNMGSFSSKGPTHDGRLKPDIVAPGEYITSARSNGENSTDQCGDGSLPNANGLMSISGTSMATPLATAATTILRQYLVDGYFPTGESVEENKLLPTGSLLKALMINNAQLLNGTYFWSASSTNPSNAIFEQINGANLIQGWGALRMNNWLYVKSSNPTPPSRWIGIGGLGKNQKATEWKEDSLSSGLNKSYCFTYKPSSSSSGSGGGGGTPRIVATLVWTDPPSYSGAKFNLVNNLDLLLLNSDDDSIITIGNSGGSLQPAGKVAQPDTLNNVEGIIINPTKAMNYKFTIAGTNVPIGPQKFSFVFHGENGQFDWADSCPQCVDGVQFPCLITNGIGIQSCGSDLLWTKCIVQSCNEGYNYNSLKNTCDKFLSYNYIIIIVAGGTMVLIILLLMWIKYQEYKESKRDSFRRFDDGTGIFVRPKDKDAKVTPPDLYNLVSPFIIELTIATACSLVATAASILQPFYIGNIVNNIPTTKSIGEFKSDFIIIFILAFIEFLFTNVGSWISGIVNEKMVMRLQNKVFRALIAQDMGFFQRNNSALLMNVLIVDTPMLRSALTGILLSIATGVCKLVGSLVFIFTISWKLSLAFFAAVPILGLVTQIQSQFTKRLTRQLLFHNSKASQHGTESLTNMHVVTNYCKQEKEMVKYSDQLMNVFITARKLIITNTFAGTGKWLLIESLTFVILYFSAYLVIQKQFTVGLMISFSLYIGYVVDASSSLFGVYVSYIQCLASATRVFMILRSAPRKRTTLEEEEADRLAGLSGGGGGGGDNGDDKKDKQNIENGKDVLPSNIITPIDNVENSNGKQDDPNNNNNNIGNLDYSEQLDGVSTVADSTVGLTKRELKKQKEKEQKEYFKQTGISVAETPTFLPSSYTELTECRGEIEFKNVSFRYPTRPDVQVLHNINMKFEAGKCYGLVGPSGSGKSTTLELISKFYPLHGETGGKIYMDGIDIAKIRPNNLRSFVTNVHQHPFLFDATIGENIGYAIDNPTQEDIIEAAKLAYAHEFINDLPKKYDTQIGEAGNLSGGQKKRIAVARAICAKRKIMLLDEITAELDPESEEAITQSIKVLTQGHTVVMVAHKVAAVRDCDKIFVLEKGYLVEEGTHDELMANKGKYYRMFSEDKDDTPLQNNNNNKNNNNNNNNNEPSSSSTPPNDQPTPPPQEQQEQKNDQPPPPPPQEQQEQQEQQQQQQQEQQQQQQQQQQQQQQQQQQQQQQQQQQQQQQQQQNDQPPNDYDQVPPPPPLPSESPSPPTGNNDGQPLVQMDEENDEER.

An N-terminal signal peptide occupies residues 1–31; sequence MKFQFSSPSKIFLFSSVILILIFIGIKFELL. Residues 96 to 134 are disordered; the sequence is INNNNNNNNKLNNNNNNNNNNNNNNNNNNNNNNNNNNNN. One can recognise a Peptidase S8 domain in the interval 356–763; the sequence is PTVIFGTKDK…ASSTNPSNAI (408 aa). Residues Asp-387 and His-432 each act as charge relay system in the active site. Residues Asn-594, Asn-621, and Asn-672 are each glycosylated (N-linked (GlcNAc...) asparagine). Ser-695 serves as the catalytic Charge relay system. N-linked (GlcNAc...) asparagine glycosylation is found at Asn-747 and Asn-823. The next 3 helical transmembrane spans lie at 1011-1031, 1076-1096, and 1121-1141; these read YIIIIVAGGTMVLIILLLMWI, FIIELTIATACSLVATAASIL, and FIIIFILAFIEFLFTNVGSWI. The ABC transmembrane type-1 domain maps to 1080–1363; sequence LTIATACSLV…LFGVYVSYIQ (284 aa). The N-linked (GlcNAc...) asparagine glycan is linked to Asn-1172. 3 helical membrane passes run 1210–1230, 1309–1329, and 1332–1352; these read LVFIFTISWKLSLAFFAAVPI, WLLIESLTFVILYFSAYLVIQ, and FTVGLMISFSLYIGYVVDASS. The interval 1385–1455 is disordered; that stretch reads LEEEEADRLA…NNNNNIGNLD (71 aa). Positions 1396-1405 are enriched in gly residues; sequence LSGGGGGGGD. The segment covering 1407-1420 has biased composition (basic and acidic residues); sequence GDDKKDKQNIENGK. Residues 1518–1756 form the ABC transporter domain; sequence IEFKNVSFRY…KGKYYRMFSE (239 aa). Residue Asn-1522 is glycosylated (N-linked (GlcNAc...) asparagine). 1553–1560 is an ATP binding site; that stretch reads GPSGSGKS. N-linked (GlcNAc...) asparagine glycosylation occurs at Asn-1658. The segment at 1757-1906 is disordered; it reads DKDDTPLQNN…QMDEENDEER (150 aa). 2 stretches are compositionally biased toward low complexity: residues 1765-1779 and 1814-1871; these read NNNNNKNNNNNNNNN and EQQE…DYDQ. The segment covering 1872–1886 has biased composition (pro residues); that stretch reads VPPPPPLPSESPSPP.

The protein in the C-terminal section; belongs to the ABC transporter superfamily. ABCB family. Multidrug resistance exporter (TC 3.A.1.201) subfamily. This sequence in the N-terminal section; belongs to the peptidase S8 family.

The protein localises to the membrane. In terms of biological role, intercellular communication via tagB may mediate integration of cellular differentiation with morphogenesis. The chain is Serine protease/ABC transporter B family protein tagB (tagB) from Dictyostelium discoideum (Social amoeba).